The sequence spans 2742 residues: Neurobeachin-like protein 2 (2742 aa).

Disordered regions lie at residues 1312 to 1333 (ALSP…PSES) and 1356 to 1434 (LERA…QQTP). Positions 1384 to 1394 (TPSPLDGPRPF) are enriched in pro residues. Residues 1421–1433 (GDDTSNTSNPQQT) show a composition bias toward polar residues. Phosphothreonine is present on T1855. A BEACH-type PH domain is found at 1903–2028 (EKREKLVLSA…LRNQVYSLLL (126 aa)). Residues 2041–2333 (RSPLEMLRAS…QLLKEPHPPR (293 aa)) enclose the BEACH domain. WD repeat units lie at residues 2374–2412 (LVLA…TWLP), 2436–2479 (KLLS…SLPR), 2482–2519 (LLNQ…VWRL), 2532–2570 (KPVQ…IHTV), 2577–2619 (AALR…TYSL), 2627–2662 (RLRA…ILHL), and 2670–2705 (PPLP…VGAG). Residues S2727 and S2730 each carry the phosphoserine modification.

This sequence belongs to the WD repeat neurobeachin family.

It localises to the endoplasmic reticulum. Probably involved in thrombopoiesis. Plays a role in the development or secretion of alpha-granules, that contain several growth factors important for platelet biogenesis. This is Neurobeachin-like protein 2 (Nbeal2) from Mus musculus (Mouse).